A 1010-amino-acid polypeptide reads, in one-letter code: MAARVLVIGNGGREHTLAWKLAQSTHVKQVLVTPGNAGTACSEKISNTDISISDHTALAQFCKDEKIEFVVVGPEAPLAAGIVGNLNSVGVRCFGPTAQAAQLESSKRFAKEFMDRHGISTARWRAFTKPKEACDFIMSADFPALVVKASGLAAGKGVIVAKSKEEACEAVREIMQGKAFGEAGETVVIEELLEGEEVSCLCFTDGRTVAPMPPAQDHKRLLEGDEGPNTGGMGAYCPAPQVSKDLLLKIKNNILQRTVDGMQEEGMPYTGVLYAGIMLTKNGPKVLEFNCRFGDPECQVILPLLKSDLYEVIQSILDGLLCTSLPVWLDNCAAVTVVMASKGYPGDYTKGVEITGFPEAQALGLEVFQAGTALKDGKVVTNGGRVLTVTAIRENLISALEEARKGLAAIKFEGAVYRKDIGFRAIAFLQQPRGLTYKESGVDIAAGNMLVQKIKPLAKATSRPGCDVDLGGFAGLFDLKAAGFTDPLLACGTDGVGTKLKIAQQCSKHDTIGQDLVAMCVNDILAQGAEPLFFLDYFSCGKLDLRTTEAVITGIAKACKKAGCALLGGETAEMPDMYPPGEYDLAGFAVGAMERDQKLPQLERITEGDAVIGIASSGLHSNGFSLVRKIVAKSSLEYSSPAPGGCGDQTLGDLLLTPTKIYSRSLLPVLRSGRVKAVAHITGGGLLENIPRVLPQKLGVNLDAQTWRVPRIFSWLQQEGHLSEEEMARTFNCGIGAALVVSEDLVKQTLQDIEQHQEEACVIGRVVACPKGSPRVKVEHLIETMQINGSVLENGTLRNHFSVQPKKARVAVLISGTGSNLQALIDSTREPSSLAHIVIVISNKAAVAGLDKAEKAGIPTRVINHKLYKNRAAFDTAIDEVLEEFSTDIVCLAGFMRILSGPFVRKWNGKMLNIHPSLLPSFKGSNAHEQVLDAGVTVTGCTVHFVAEDVDAGQIILQEAVPVKRGDTVETLSERVKLAEHKIFPSALQLVASGAVRLGENGRICWVTED.

Alanine 2 carries the N-acetylalanine modification. Residues 111–318 (KEFMDRHGIS…LYEVIQSILD (208 aa)) form the ATP-grasp domain. Residues 190–193 (EELL), glutamate 197, arginine 220, and asparagine 229 contribute to the ATP site. 2 residues coordinate Mg(2+): glutamate 288 and asparagine 290. Position 350 is an N6-acetyllysine (lysine 350). An AIRS domain region spans residues 434 to 809 (GLTYKESGVD…HFSVQPKKAR (376 aa)). Serine 440 is subject to Phosphoserine. Threonine 682 is subject to Phosphothreonine. Serine 802 carries the phosphoserine modification. The tract at residues 810–1010 (VAVLISGTGS…NGRICWVTED (201 aa)) is GART domain. 818–820 (GSN) provides a ligand contact to N(1)-(5-phospho-beta-D-ribosyl)glycinamide. Residues arginine 871, 896 to 899 (MRIL), and asparagine 913 each bind (6R)-10-formyltetrahydrofolate. Histidine 915 acts as the Proton donor in catalysis. 947 to 951 (AEDVD) lines the (6R)-10-formyltetrahydrofolate pocket. Residue 977–980 (KLAE) coordinates N(1)-(5-phospho-beta-D-ribosyl)glycinamide.

The protein in the N-terminal section; belongs to the GARS family. It in the central section; belongs to the AIR synthase family. This sequence in the C-terminal section; belongs to the GART family. Homodimer. The cofactor is Mg(2+). It depends on Mn(2+) as a cofactor.

It carries out the reaction 5-phospho-beta-D-ribosylamine + glycine + ATP = N(1)-(5-phospho-beta-D-ribosyl)glycinamide + ADP + phosphate + H(+). The enzyme catalyses 2-formamido-N(1)-(5-O-phospho-beta-D-ribosyl)acetamidine + ATP = 5-amino-1-(5-phospho-beta-D-ribosyl)imidazole + ADP + phosphate + H(+). It catalyses the reaction N(1)-(5-phospho-beta-D-ribosyl)glycinamide + (6R)-10-formyltetrahydrofolate = N(2)-formyl-N(1)-(5-phospho-beta-D-ribosyl)glycinamide + (6S)-5,6,7,8-tetrahydrofolate + H(+). It functions in the pathway purine metabolism; IMP biosynthesis via de novo pathway; 5-amino-1-(5-phospho-D-ribosyl)imidazole from N(2)-formyl-N(1)-(5-phospho-D-ribosyl)glycinamide: step 2/2. The protein operates within purine metabolism; IMP biosynthesis via de novo pathway; N(1)-(5-phospho-D-ribosyl)glycinamide from 5-phospho-alpha-D-ribose 1-diphosphate: step 2/2. Its pathway is purine metabolism; IMP biosynthesis via de novo pathway; N(2)-formyl-N(1)-(5-phospho-D-ribosyl)glycinamide from N(1)-(5-phospho-D-ribosyl)glycinamide (10-formyl THF route): step 1/1. Functionally, trifunctional enzyme that catalyzes three distinct reactions as part of the 'de novo' inosine monophosphate biosynthetic pathway. This Bos taurus (Bovine) protein is Trifunctional purine biosynthetic protein adenosine-3 (GART).